The sequence spans 255 residues: BTB/POZ domain-containing protein KCTD14 (255 aa).

Positions 1 to 29 (MWQGCAVERPVGRMTSQTPLPQSPRPRRP) are disordered. The 98-residue stretch at 33 to 130 (TVVELNVGGE…LLEDMPQIFG (98 aa)) folds into the BTB domain.

The polypeptide is BTB/POZ domain-containing protein KCTD14 (KCTD14) (Homo sapiens (Human)).